A 219-amino-acid chain; its full sequence is Steroid receptor RNA activator 1 (219 aa).

2 disordered regions span residues 1-90 (MAEL…SSPV) and 192-219 (SLSS…QPSS). The segment covering 23–32 (YGLQTQTGGT) has biased composition (polar residues). S48 is modified (phosphoserine). The segment covering 55–76 (SGPPPVDHPPPSSKASRPPPMG) has biased composition (pro residues). Positions 192–203 (SLSSEENKEEKS) are enriched in basic and acidic residues. Residues 206-219 (APENQTIPGFQPSS) are compositionally biased toward polar residues.

It belongs to the SRA1 family. SRA1 RNA exists in a ribonucleoprotein complex containing NCOA1. The RNA also forms a complex with PUS1 and RARG in the nucleus. Interacts with AR. Expressed in various prostate cancer cell lines.

The protein localises to the nucleus. It is found in the cytoplasm. Functionally, functional RNA which acts as a transcriptional coactivator that selectively enhances steroid receptor-mediated transactivation ligand-independently through a mechanism involving the modulating N-terminal domain (AF-1) of steroid receptors. Also mediates transcriptional coactivation of steroid receptors ligand-dependently through the steroid-binding domain (AF-2). Enhances cellular proliferation and differentiation and promotes apoptosis in vivo. May play a role in tumorigenesis. In Rattus norvegicus (Rat), this protein is Steroid receptor RNA activator 1.